A 1441-amino-acid chain; its full sequence is Probable cleavage and polyadenylation specificity factor subunit 1 (1441 aa).

The protein belongs to the CPSF1 family. CPSF is a heterotetramer composed of four distinct subunits 160, 100, 70 and 30 kDa.

The protein localises to the nucleus. Functionally, CPSF plays a key role in pre-mRNA 3'-end formation, recognizing the AAUAAA signal sequence and interacting with poly(A)polymerase and other factors to bring about cleavage and poly(A) addition. This subunit is involved in the RNA recognition step of the polyadenylation reaction. This is Probable cleavage and polyadenylation specificity factor subunit 1 from Oryza sativa subsp. japonica (Rice).